Reading from the N-terminus, the 399-residue chain is C-type lectin domain family 4 member M (399 aa).

The Cytoplasmic portion of the chain corresponds to 1–49 (MSDSKEQRVQPLGLLEEDPTTSGIRLFPRDFQFQQTHGHKSSTGCLGHG). Residues 14–15 (LL) carry the Endocytosis signal motif. The helical; Signal-anchor for type II membrane protein transmembrane segment at 50 to 70 (PLVLQLLSFTLLAGFLVAILV) threads the bilayer. The Extracellular segment spans residues 71–399 (QVYKGPSSLS…KKPTACFRDE (329 aa)). Asn92 carries N-linked (GlcNAc...) asparagine glycosylation. 7 consecutive repeat copies span residues 108–130 (KLQE…PEKS), 131–153 (RLQE…PENS), 154–176 (RLQE…PEKS), 177–199 (KQQE…PEKS), 200–222 (KQQE…PEKS), 223–245 (KQQE…PDQS), and 246–268 (KQQQ…CCRC). Residues 108–269 (KLQEIYQELT…AFERLCCRCP (162 aa)) form a 7 X approximate tandem repeats region. 4 disulfides stabilise this stretch: Cys265/Cys395, Cys268/Cys279, Cys296/Cys389, and Cys368/Cys381. Positions 274-390 (FFQGNCYFIS…CNVDNYWICK (117 aa)) constitute a C-type lectin domain. 6 residues coordinate Ca(2+): Glu359, Asn361, Ser363, Glu366, Asn377, and Asp378. Asn361 carries an N-linked (GlcNAc...) asparagine glycan.

Homotetramer.

Its subcellular location is the membrane. Its function is as follows. Probable pathogen-recognition receptor involved in peripheral immune surveillance in liver. May mediate the endocytosis of pathogens which are subsequently degraded in lysosomal compartments. Probably recognizes in a calcium-dependent manner high mannose N-linked oligosaccharides in a variety of pathogen antigens. Is a receptor for ICAM3, probably by binding to mannose-like carbohydrates. In Nomascus concolor (Black crested gibbon), this protein is C-type lectin domain family 4 member M (CLEC4M).